The sequence spans 207 residues: Small ribosomal subunit protein uS4 (207 aa).

A disordered region spans residues 31–55 (KCKLDSKPGQHGRTSGARTSDYGTQ). Over residues 42 to 53 (GRTSGARTSDYG) the composition is skewed to polar residues. The S4 RNA-binding domain maps to 97–160 (SRLDNVVYRM…KKQARIVEAL (64 aa)).

It belongs to the universal ribosomal protein uS4 family. In terms of assembly, part of the 30S ribosomal subunit. Contacts protein S5. The interaction surface between S4 and S5 is involved in control of translational fidelity.

Functionally, one of the primary rRNA binding proteins, it binds directly to 16S rRNA where it nucleates assembly of the body of the 30S subunit. With S5 and S12 plays an important role in translational accuracy. The sequence is that of Small ribosomal subunit protein uS4 from Burkholderia ambifaria (strain ATCC BAA-244 / DSM 16087 / CCUG 44356 / LMG 19182 / AMMD) (Burkholderia cepacia (strain AMMD)).